The sequence spans 289 residues: Oxaloacetate decarboxylase (289 aa).

Serine 50 contributes to the substrate binding site. Aspartate 88 provides a ligand contact to Mg(2+). 2 residues coordinate substrate: arginine 159 and histidine 235.

Belongs to the isocitrate lyase/PEP mutase superfamily. Oxaloacetate decarboxylase family. Homotetramer; dimer of dimers. Mg(2+) is required as a cofactor.

It carries out the reaction oxaloacetate + H(+) = pyruvate + CO2. Functionally, catalyzes the decarboxylation of oxaloacetate into pyruvate. Seems to play a role in maintaining cellular concentrations of bicarbonate and pyruvate. This chain is Oxaloacetate decarboxylase, found in Pseudomonas savastanoi pv. phaseolicola (strain 1448A / Race 6) (Pseudomonas syringae pv. phaseolicola (strain 1448A / Race 6)).